A 910-amino-acid chain; its full sequence is Valine--tRNA ligase (910 aa).

Positions 45 to 55 match the 'HIGH' region motif; sequence PNVTGSLHMGH. The 'KMSKS' region motif lies at 554 to 558; the sequence is KMSKS. Residue Lys557 participates in ATP binding. Residues 842–910 are a coiled coil; it reads DLQAEAARLA…TAESRIRDAS (69 aa).

It belongs to the class-I aminoacyl-tRNA synthetase family. ValS type 1 subfamily. In terms of assembly, monomer.

Its subcellular location is the cytoplasm. The enzyme catalyses tRNA(Val) + L-valine + ATP = L-valyl-tRNA(Val) + AMP + diphosphate. Its function is as follows. Catalyzes the attachment of valine to tRNA(Val). As ValRS can inadvertently accommodate and process structurally similar amino acids such as threonine, to avoid such errors, it has a 'posttransfer' editing activity that hydrolyzes mischarged Thr-tRNA(Val) in a tRNA-dependent manner. The polypeptide is Valine--tRNA ligase (Brucella melitensis biotype 1 (strain ATCC 23456 / CCUG 17765 / NCTC 10094 / 16M)).